The sequence spans 312 residues: Tetraacyldisaccharide 4'-kinase (312 aa).

60–67 (IAGGSGKT) contributes to the ATP binding site.

This sequence belongs to the LpxK family.

It catalyses the reaction a lipid A disaccharide + ATP = a lipid IVA + ADP + H(+). Its pathway is glycolipid biosynthesis; lipid IV(A) biosynthesis; lipid IV(A) from (3R)-3-hydroxytetradecanoyl-[acyl-carrier-protein] and UDP-N-acetyl-alpha-D-glucosamine: step 6/6. Transfers the gamma-phosphate of ATP to the 4'-position of a tetraacyldisaccharide 1-phosphate intermediate (termed DS-1-P) to form tetraacyldisaccharide 1,4'-bis-phosphate (lipid IVA). The protein is Tetraacyldisaccharide 4'-kinase of Helicobacter pylori (strain J99 / ATCC 700824) (Campylobacter pylori J99).